A 229-amino-acid polypeptide reads, in one-letter code: Biosynthetic peptidoglycan transglycosylase (229 aa).

A helical membrane pass occupies residues 10–30 (LLLALVLVVLYQFWIFMHILW).

The protein belongs to the glycosyltransferase 51 family.

It localises to the cell inner membrane. The catalysed reaction is [GlcNAc-(1-&gt;4)-Mur2Ac(oyl-L-Ala-gamma-D-Glu-L-Lys-D-Ala-D-Ala)](n)-di-trans,octa-cis-undecaprenyl diphosphate + beta-D-GlcNAc-(1-&gt;4)-Mur2Ac(oyl-L-Ala-gamma-D-Glu-L-Lys-D-Ala-D-Ala)-di-trans,octa-cis-undecaprenyl diphosphate = [GlcNAc-(1-&gt;4)-Mur2Ac(oyl-L-Ala-gamma-D-Glu-L-Lys-D-Ala-D-Ala)](n+1)-di-trans,octa-cis-undecaprenyl diphosphate + di-trans,octa-cis-undecaprenyl diphosphate + H(+). It functions in the pathway cell wall biogenesis; peptidoglycan biosynthesis. Its function is as follows. Peptidoglycan polymerase that catalyzes glycan chain elongation from lipid-linked precursors. The protein is Biosynthetic peptidoglycan transglycosylase of Methylobacillus flagellatus (strain ATCC 51484 / DSM 6875 / VKM B-1610 / KT).